The primary structure comprises 135 residues: Calcium-binding protein KIC (135 aa).

An EF-hand domain is found at 74 to 109; that stretch reads MSKEDAQGMVREGDLDGDGALNQTEFCVLMVRLSPE. The Ca(2+) site is built by D87, D89, D91, and E98.

Interacts with KCBP (via C-terminus). KIC and calmodulin show competitive binding to KCBP. Interacts with CML42. Binds to ABCG36. Expressed in stems, leaves and flowers.

In terms of biological role, calcium-binding regulatory protein that interacts with kinesin motor protein KCBP in a calcium-dependent manner. Inhibits KCBP microtubule binding activity and microtubule-stimulated ATPase activity. Involved in the regulation of trichome branching through its interaction with KCBP. The chain is Calcium-binding protein KIC from Arabidopsis thaliana (Mouse-ear cress).